Here is a 204-residue protein sequence, read N- to C-terminus: Holliday junction branch migration complex subunit RuvA (204 aa).

The segment at 1–64 is domain I; it reads MIGRLCGTAE…EDAITLFGFI (64 aa). The interval 65–143 is domain II; that stretch reads DAAERDWFRL…AMPTGSAFIP (79 aa). The interval 144–154 is flexible linker; that stretch reads TGTAPPVAPPQ. The domain III stretch occupies residues 154 to 204; it reads QGKLADALSALVNLGYRRAEAEAALSAVQAEAGEDAALDELIRGGLRRLAR.

This sequence belongs to the RuvA family. In terms of assembly, homotetramer. Forms an RuvA(8)-RuvB(12)-Holliday junction (HJ) complex. HJ DNA is sandwiched between 2 RuvA tetramers; dsDNA enters through RuvA and exits via RuvB. An RuvB hexamer assembles on each DNA strand where it exits the tetramer. Each RuvB hexamer is contacted by two RuvA subunits (via domain III) on 2 adjacent RuvB subunits; this complex drives branch migration. In the full resolvosome a probable DNA-RuvA(4)-RuvB(12)-RuvC(2) complex forms which resolves the HJ.

Its subcellular location is the cytoplasm. The RuvA-RuvB-RuvC complex processes Holliday junction (HJ) DNA during genetic recombination and DNA repair, while the RuvA-RuvB complex plays an important role in the rescue of blocked DNA replication forks via replication fork reversal (RFR). RuvA specifically binds to HJ cruciform DNA, conferring on it an open structure. The RuvB hexamer acts as an ATP-dependent pump, pulling dsDNA into and through the RuvAB complex. HJ branch migration allows RuvC to scan DNA until it finds its consensus sequence, where it cleaves and resolves the cruciform DNA. This Acidiphilium cryptum (strain JF-5) protein is Holliday junction branch migration complex subunit RuvA.